A 280-amino-acid chain; its full sequence is Succinate dehydrogenase [ubiquinone] iron-sulfur subunit 2, mitochondrial (280 aa).

The N-terminal 28 residues, 1 to 28 (MAFGLIGRVVGTKSSRLSTAARLIPARW), are a transit peptide targeting the mitochondrion. Positions 51–140 (FQIYRWNPDN…ETTITPLPHM (90 aa)) constitute a 2Fe-2S ferredoxin-type domain. [2Fe-2S] cluster-binding residues include cysteine 101, cysteine 106, and cysteine 121. The 31-residue stretch at 183 to 213 (DRAKLDGMYECILCACCSTSCPSYWWNPESY) folds into the 4Fe-4S ferredoxin-type domain. Residues cysteine 193, cysteine 196, and cysteine 199 each coordinate [4Fe-4S] cluster. Residue cysteine 203 coordinates [3Fe-4S] cluster. A ubiquinone is bound at residue tryptophan 208. Residues cysteine 250 and cysteine 256 each contribute to the [3Fe-4S] cluster site. Residue cysteine 260 participates in [4Fe-4S] cluster binding.

It belongs to the succinate dehydrogenase/fumarate reductase iron-sulfur protein family. In terms of assembly, component of complex II composed of eight subunits in plants: four classical SDH subunits SDH1, SDH2, SDH3 and SDH4 (a flavoprotein (FP), an iron-sulfur protein (IP), and a cytochrome b composed of a large and a small subunit.), as well as four subunits unknown in mitochondria from bacteria and heterotrophic eukaryotes. It depends on [2Fe-2S] cluster as a cofactor. The cofactor is [3Fe-4S] cluster. [4Fe-4S] cluster serves as cofactor. As to expression, ubiquitous. Preferentially expressed in flowers, inflorescences and root tips.

The protein resides in the mitochondrion inner membrane. It catalyses the reaction a quinone + succinate = fumarate + a quinol. Its pathway is carbohydrate metabolism; tricarboxylic acid cycle; fumarate from succinate (eukaryal route): step 1/1. Functionally, iron-sulfur protein (IP) subunit of succinate dehydrogenase (SDH) that is involved in complex II of the mitochondrial electron transport chain and is responsible for transferring electrons from succinate to ubiquinone (coenzyme Q). In Arabidopsis thaliana (Mouse-ear cress), this protein is Succinate dehydrogenase [ubiquinone] iron-sulfur subunit 2, mitochondrial (SDH2-2).